We begin with the raw amino-acid sequence, 572 residues long: Proline--tRNA ligase (572 aa).

This sequence belongs to the class-II aminoacyl-tRNA synthetase family. ProS type 1 subfamily. As to quaternary structure, homodimer.

It localises to the cytoplasm. It carries out the reaction tRNA(Pro) + L-proline + ATP = L-prolyl-tRNA(Pro) + AMP + diphosphate. Catalyzes the attachment of proline to tRNA(Pro) in a two-step reaction: proline is first activated by ATP to form Pro-AMP and then transferred to the acceptor end of tRNA(Pro). As ProRS can inadvertently accommodate and process non-cognate amino acids such as alanine and cysteine, to avoid such errors it has two additional distinct editing activities against alanine. One activity is designated as 'pretransfer' editing and involves the tRNA(Pro)-independent hydrolysis of activated Ala-AMP. The other activity is designated 'posttransfer' editing and involves deacylation of mischarged Ala-tRNA(Pro). The misacylated Cys-tRNA(Pro) is not edited by ProRS. This chain is Proline--tRNA ligase, found in Psychrobacter cryohalolentis (strain ATCC BAA-1226 / DSM 17306 / VKM B-2378 / K5).